The chain runs to 473 residues: Aspartyl/glutamyl-tRNA(Asn/Gln) amidotransferase subunit B (473 aa).

Belongs to the GatB/GatE family. GatB subfamily. In terms of assembly, heterotrimer of A, B and C subunits.

The catalysed reaction is L-glutamyl-tRNA(Gln) + L-glutamine + ATP + H2O = L-glutaminyl-tRNA(Gln) + L-glutamate + ADP + phosphate + H(+). The enzyme catalyses L-aspartyl-tRNA(Asn) + L-glutamine + ATP + H2O = L-asparaginyl-tRNA(Asn) + L-glutamate + ADP + phosphate + 2 H(+). Functionally, allows the formation of correctly charged Asn-tRNA(Asn) or Gln-tRNA(Gln) through the transamidation of misacylated Asp-tRNA(Asn) or Glu-tRNA(Gln) in organisms which lack either or both of asparaginyl-tRNA or glutaminyl-tRNA synthetases. The reaction takes place in the presence of glutamine and ATP through an activated phospho-Asp-tRNA(Asn) or phospho-Glu-tRNA(Gln). The chain is Aspartyl/glutamyl-tRNA(Asn/Gln) amidotransferase subunit B from Finegoldia magna (strain ATCC 29328 / DSM 20472 / WAL 2508) (Peptostreptococcus magnus).